A 347-amino-acid chain; its full sequence is 2-(3-amino-3-carboxypropyl)histidine synthase subunit 1 (347 aa).

[4Fe-4S] cluster-binding residues include Cys77, Cys177, and Cys302.

This sequence belongs to the DPH1/DPH2 family. DPH1 subfamily. In terms of assembly, component of the 2-(3-amino-3-carboxypropyl)histidine synthase complex composed of DPH1, DPH2, DPH3 and a NADH-dependent reductase, predominantly CBR1. It depends on [4Fe-4S] cluster as a cofactor.

It localises to the cytoplasm. It catalyses the reaction L-histidyl-[translation elongation factor 2] + S-adenosyl-L-methionine = 2-[(3S)-amino-3-carboxypropyl]-L-histidyl-[translation elongation factor 2] + S-methyl-5'-thioadenosine + H(+). It participates in protein modification; peptidyl-diphthamide biosynthesis. Catalyzes the first step of diphthamide biosynthesis, a post-translational modification of histidine which occurs in elongation factor 2. DPH1 and DPH2 transfer a 3-amino-3-carboxypropyl (ACP) group from S-adenosyl-L-methionine (SAM) to a histidine residue, the reaction is assisted by a reduction system comprising DPH3 and a NADH-dependent reductase, predominantly CBR1. In Encephalitozoon cuniculi (strain GB-M1) (Microsporidian parasite), this protein is 2-(3-amino-3-carboxypropyl)histidine synthase subunit 1 (DPH1).